Consider the following 168-residue polypeptide: Photosystem I assembly protein Ycf3 (168 aa).

TPR repeat units follow at residues 35–68, 72–105, and 120–153; these read AFTY…EIDP, SYIL…NPFL, and GEQA…TPGN.

Belongs to the Ycf3 family.

It localises to the plastid. The protein resides in the chloroplast thylakoid membrane. Its function is as follows. Essential for the assembly of the photosystem I (PSI) complex. May act as a chaperone-like factor to guide the assembly of the PSI subunits. The polypeptide is Photosystem I assembly protein Ycf3 (Gossypium barbadense (Sea Island cotton)).